The sequence spans 481 residues: uncharacterized protein (481 aa).

11 consecutive transmembrane segments (helical) span residues 14-34 (LGFC…GIFL), 46-66 (FAPM…IVFA), 90-110 (IGIY…GVLA), 134-154 (FSVK…INLF), 167-187 (TVGK…IITT), 218-238 (FSSM…FESI), 258-278 (IAIF…MLLG), 303-323 (IIVV…SFGA), 377-397 (LAVI…IALA), 411-431 (AFTD…LAVS), and 446-466 (YFSI…AYLH).

The protein belongs to the amino acid-polyamine-organocation (APC) superfamily.

It localises to the cell membrane. Probable amino-acid or metabolite transport protein. This is an uncharacterized protein from Mycobacterium tuberculosis (strain CDC 1551 / Oshkosh).